Here is a 156-residue protein sequence, read N- to C-terminus: D-aminoacyl-tRNA deacylase (156 aa).

The Gly-cisPro motif, important for rejection of L-amino acids signature appears at 137 to 138; it reads GP.

It belongs to the DTD family. In terms of assembly, homodimer.

Its subcellular location is the cytoplasm. The enzyme catalyses glycyl-tRNA(Ala) + H2O = tRNA(Ala) + glycine + H(+). The catalysed reaction is a D-aminoacyl-tRNA + H2O = a tRNA + a D-alpha-amino acid + H(+). In terms of biological role, an aminoacyl-tRNA editing enzyme that deacylates mischarged D-aminoacyl-tRNAs. Also deacylates mischarged glycyl-tRNA(Ala), protecting cells against glycine mischarging by AlaRS. Acts via tRNA-based rather than protein-based catalysis; rejects L-amino acids rather than detecting D-amino acids in the active site. By recycling D-aminoacyl-tRNA to D-amino acids and free tRNA molecules, this enzyme counteracts the toxicity associated with the formation of D-aminoacyl-tRNA entities in vivo and helps enforce protein L-homochirality. This Ruegeria sp. (strain TM1040) (Silicibacter sp.) protein is D-aminoacyl-tRNA deacylase.